The chain runs to 147 residues: D-aminoacyl-tRNA deacylase (147 aa).

The Gly-cisPro motif, important for rejection of L-amino acids motif lies at 137-138; that stretch reads GP.

This sequence belongs to the DTD family. As to quaternary structure, homodimer.

It localises to the cytoplasm. The catalysed reaction is glycyl-tRNA(Ala) + H2O = tRNA(Ala) + glycine + H(+). It carries out the reaction a D-aminoacyl-tRNA + H2O = a tRNA + a D-alpha-amino acid + H(+). An aminoacyl-tRNA editing enzyme that deacylates mischarged D-aminoacyl-tRNAs. Also deacylates mischarged glycyl-tRNA(Ala), protecting cells against glycine mischarging by AlaRS. Acts via tRNA-based rather than protein-based catalysis; rejects L-amino acids rather than detecting D-amino acids in the active site. By recycling D-aminoacyl-tRNA to D-amino acids and free tRNA molecules, this enzyme counteracts the toxicity associated with the formation of D-aminoacyl-tRNA entities in vivo and helps enforce protein L-homochirality. This Bacillus licheniformis (strain ATCC 14580 / DSM 13 / JCM 2505 / CCUG 7422 / NBRC 12200 / NCIMB 9375 / NCTC 10341 / NRRL NRS-1264 / Gibson 46) protein is D-aminoacyl-tRNA deacylase.